Reading from the N-terminus, the 79-residue chain is Protein GOLVEN 2 (79 aa).

The signal sequence occupies residues 1 to 26 (MAIRVSHKSFLVALLLILFISSPTQA). Residues 27 to 65 (RSLREVVRNRTLLVVEKSQESRKIRHEGGGSDVDGLMDM) constitute a propeptide that is removed on maturation. The interval 49–79 (KIRHEGGGSDVDGLMDMDYNSANKKRPIHNR) is disordered. At Tyr67 the chain carries Sulfotyrosine. Pro75 carries the post-translational modification Hydroxyproline.

Belongs to the RGF family. In terms of assembly, binds to LRR receptor-like serine/threonine-protein kinases to trigger their dimerization with SERK proteins and subsequent signaling. Expressed in siliques, stems, hypocotyls, shoot apex, leaves, flowers and cotyledons, and, to a lower extent, in roots.

The protein localises to the secreted. It is found in the endoplasmic reticulum. Its function is as follows. Signaling peptide (root growth factor) that regulates the pattern of root growth and lateral root development by modulating the length and the number of cortical cells in the root apical meristem (RAM), and the anticlinal asymmetric cell divisions in lateral root initiation cells. Also involved in the regulation of hypocotyl bending and root gravitropism, probably by influencing the formation of auxin gradients. Maintains the postembryonic root stem cell niche. The protein is Protein GOLVEN 2 of Arabidopsis thaliana (Mouse-ear cress).